Consider the following 289-residue polypeptide: Testis-expressed protein 26 (289 aa).

The interval 1–26 (MEQPGPRAPDPSLCHHNLQPTDDPNW) is disordered. 5 mn regions span residues 30 to 42 (ATTM…PKTG), 69 to 83 (QTQY…SHSK), 144 to 157 (ISLT…RSKA), 179 to 193 (DTEF…AKIP), and 233 to 247 (QTTY…YPDF).

This Homo sapiens (Human) protein is Testis-expressed protein 26 (TEX26).